The sequence spans 434 residues: KH domain-containing protein 3 (434 aa).

The involved in RNA binding stretch occupies residues 1–39 (MATLKTFRTLVQLKHKLGKAYEIVGEPRLPKWFHVEYLE). A KH; atypical domain is found at 40-118 (DPKKMYVEPT…CRMKLMEKEA (79 aa)). Phosphothreonine is present on residues Thr-267 and Thr-279. The required for interaction with NUMA1 and regulation of apoptosis in response to DNA damage stretch occupies residues 334-434 (VREAATQQTP…RAVWEPFVML (101 aa)).

The protein belongs to the KHDC1 family. Component of the subcortical maternal complex (SCMC), at least composed of NLRP5, KHDC3, OOEP, and TLE6. Within the complex, interacts with NLRP5, KHDC3 and TLE6. The SCMC may facilitate translocation of its components between the nuclear and cytoplasmic compartments. Forms a scaffold complex with OOEP/FLOPED, and interacts with BLM and TRIM25 at DNA replication forks. Interacts with PARP1; the interaction is increased following the formation of DNA double-strand breaks. Interacts (via C-terminus) with NUMA1.

Its subcellular location is the cytoplasm. The protein resides in the cell cortex. The protein localises to the nucleus. It localises to the mitochondrion. It is found in the cytoskeleton. Its subcellular location is the microtubule organizing center. The protein resides in the centrosome. The protein localises to the chromosome. Component of the subcortical maternal complex (SCMC), a multiprotein complex that plays a key role in early embryonic development. The SCMC complex is a structural constituent of cytoplasmic lattices, which consist in fibrous structures found in the cytoplasm of oocytes and preimplantation embryos. They are required to store maternal proteins critical for embryonic development, such as proteins that control epigenetic reprogramming of the preimplantation embryo, and prevent their degradation or activation. KHDC3 ensures proper spindle assembly by regulating the localization of AURKA via RHOA signaling and of PLK1 via a RHOA-independent process. Required for the localization of MAD2L1 to kinetochores to enable spindle assembly checkpoint function. As part of the OOEP-KHDC3 scaffold, recruits BLM and TRIM25 to DNA replication forks, thereby promoting the ubiquitination of BLM by TRIM25, enhancing BLM retainment at replication forks and therefore promoting stalled replication fork restart. Regulates homologous recombination-mediated DNA repair via recruitment of RAD51 to sites of DNA double-strand breaks, and sustainment of PARP1 activity, which in turn modulates downstream ATM or ATR activation. Activation of ATM or ATR in response to DNA double-strand breaks may be cell-type specific. Its role in DNA double-strand break repair is independent of its role in restarting stalled replication forks. Promotes neural stem cell neurogenesis and neuronal differentiation in the hippocampus. May regulate normal development of learning, memory and anxiety. Capable of binding RNA. The polypeptide is KH domain-containing protein 3 (Rattus norvegicus (Rat)).